The primary structure comprises 1206 residues: Translocase of chloroplast 132, chloroplastic (1206 aa).

An N-acetylglycine modification is found at Gly2. Residues 13–33 (REDKKLAEDRISDEQVVKNEL) adopt a coiled-coil conformation. Disordered regions lie at residues 33 to 75 (LVRS…SDDL) and 97 to 119 (VGDL…VGES). Residues 39-49 (VRDDNEDEVFE) show a composition bias toward acidic residues. At Ser195 the chain carries Phosphoserine. The interval 233-499 (QTEQEVEEGE…TTTEADEHDE (267 aa)) is disordered. A compositionally biased stretch (polar residues) spans 309-324 (AYTSNIVTNASGDNEV). The segment covering 325-336 (SSAVTSSPLEES) has biased composition (low complexity). Residues Ser337, Ser363, and Ser398 each carry the phosphoserine modification. The span at 357–379 (LASSPHSYPESTEVHSNSGSPGV) shows a compositional bias: polar residues. Residues 403–427 (KELEKQQSSRVHVDPEITENSHVET) are compositionally biased toward basic and acidic residues. Residues 430–440 (EVVSSVSPTES) show a composition bias toward low complexity. Polar residues predominate over residues 468 to 492 (APQQSRVNGNGSHNQFQQAEDSTTT). Positions 572-801 (DFSCTIMVLG…KLQDNIPGRP (230 aa)) constitute an AIG1-type G domain. Residues 581–588 (GKSGVGKS) form a G1 region. Residues 584–589 (GVGKSA) and 603–608 (DAFQMG) each bind GTP. A Mg(2+)-binding site is contributed by Ser588. Residues 603–606 (DAFQ) are homodimerization. The interval 607–611 (MGTKR) is G2. A G3 region spans residues 628–631 (DTPG). Residues 666 to 671 (RLDMQS) form a homodimerization region. The interval 700–703 (THAA) is G4. GTP-binding positions include His701 and 749 to 750 (EN). The G5 stretch occupies residues 749-751 (ENH). Residues 824–862 (QPKLPEQQYGDEEDEDDLEESSDSDEESEYDQLPPFKSL) are disordered. Residues 832-853 (YGDEEDEDDLEESSDSDEESEY) show a composition bias toward acidic residues. Residues 1182-1199 (LAMVAIVPLFKKLLSYYY) traverse the membrane as a helical segment.

Belongs to the TRAFAC class TrmE-Era-EngA-EngB-Septin-like GTPase superfamily. AIG1/Toc34/Toc159-like paraseptin GTPase family. TOC159 subfamily. As to quaternary structure, homodimer. Part of the TOC core complex that includes 1 protein for the specific recognition of transit peptides surrounded by a ring composed of four proteins forming translocation channels, and four to five GTP-binding proteins providing energy. This core complex can interact with components of the TIC complex to form a larger import complex. Chloroplastic protein precursor such as prSS (precursor of the RuBisCO small subunit) interacts with these complexes. The TOC complex contains a specific subset of polar lipids such as digalactosyldiacylglyceride (DGDG), phosphatidylcholine (PC) and phosphatidylglycerol (PG). The cofactor is Mg(2+). Post-translationally, phosphorylated by KOC1. As to expression, expressed in seedlings, leaves, flowers, and roots.

Its subcellular location is the plastid. It is found in the chloroplast outer membrane. The protein resides in the cytoplasm. GTPase involved in protein precursor import into chloroplasts. Seems to recognize chloroplast-destined precursor proteins and regulate their presentation to the translocation channel through GTP hydrolysis. Probably specialized in the import of nuclear encoded non-photosynthetic preproteins from the cytoplasm to the chloroplast. The protein is Translocase of chloroplast 132, chloroplastic of Arabidopsis thaliana (Mouse-ear cress).